The following is a 263-amino-acid chain: HLA class II histocompatibility antigen, DM beta chain (263 aa).

Positions 1–18 (MITFLPLLLGLSLGCTGA) are cleaved as a signal peptide. The tract at residues 19–112 (GGFVAHVEST…PFWGSLTNRT (94 aa)) is beta-1. Over 19-218 (GGFVAHVEST…PGLSPMQTLK (200 aa)) the chain is Lumenal. Disulfide bonds link cysteine 29–cysteine 97 and cysteine 43–cysteine 53. An N-linked (GlcNAc...) asparagine glycan is attached at asparagine 110. The tract at residues 113–207 (RPPSVQVAKT…GAPEPILRDW (95 aa)) is beta-2. Residues 114–208 (PPSVQVAKTT…APEPILRDWT (95 aa)) form the Ig-like C1-type domain. An intrachain disulfide couples cysteine 135 to cysteine 192. A connecting peptide region spans residues 208–218 (TPGLSPMQTLK). A helical transmembrane segment spans residues 219–239 (VSVSAVTLGLGLIIFSLGVIS). Residues 240–263 (WRRAGHSSYTPLPGSNYSEGWHIS) are Cytoplasmic-facing. The YXXZ motif signature appears at 248 to 251 (YTPL).

It belongs to the MHC class II family. In terms of assembly, heterodimer of an alpha chain (DMA) and a beta chain (DMB). Interacts with MHCII; this interaction mediates rapid selection of high-affinity peptides in a pH-dependent manner, with an optimum at pH 5.5.

It is found in the late endosome membrane. The protein localises to the lysosome membrane. Its function is as follows. Plays a critical role in catalyzing the release of class II-associated invariant chain peptide (CLIP) from newly synthesized MHC class II molecules and freeing the peptide binding site for acquisition of antigenic peptides. In B-cells, the interaction between HLA-DM and MHC class II molecules is regulated by HLA-DO. This chain is HLA class II histocompatibility antigen, DM beta chain (HLA-DMB), found in Homo sapiens (Human).